Reading from the N-terminus, the 289-residue chain is Glycerol facilitator-aquaporin gla (289 aa).

2 helical membrane passes run 10–30 (ITEF…VANV) and 41–61 (SWMI…VAFG). Positions 68-70 (NPA) match the NPA 1 motif. A run of 3 helical transmembrane segments spans residues 87 to 107 (AQYI…IVMV), 151 to 171 (FLGS…FFGS), and 209 to 229 (MIAH…LGGP). An NPA 2 motif is present at residues 235 to 237 (NPA). A helical membrane pass occupies residues 264–284 (WYAWVPVLAPILASLAAVALF).

Belongs to the MIP/aquaporin (TC 1.A.8) family.

The protein resides in the cell membrane. Its function is as follows. Mixed channel protein that transports both water and glycerol. In Lactococcus lactis subsp. cremoris (Streptococcus cremoris), this protein is Glycerol facilitator-aquaporin gla (gla).